The following is a 148-amino-acid chain: Transcriptional regulator MraZ (148 aa).

SpoVT-AbrB domains follow at residues 7–56 and 85–128; these read KERH…EPDI and LDVV…APER.

Belongs to the MraZ family. Forms oligomers.

The protein resides in the cytoplasm. It is found in the nucleoid. The sequence is that of Transcriptional regulator MraZ from Chlorobium phaeobacteroides (strain DSM 266 / SMG 266 / 2430).